Here is a 438-residue protein sequence, read N- to C-terminus: Probable tRNA pseudouridine synthase D (438 aa).

The active-site Nucleophile is the D86. The TRUD domain maps to 165-390 (GVPNFFGIQR…SKGTRREVLL (226 aa)).

It belongs to the pseudouridine synthase TruD family.

The enzyme catalyses uridine(13) in tRNA = pseudouridine(13) in tRNA. In terms of biological role, could be responsible for synthesis of pseudouridine from uracil-13 in transfer RNAs. This chain is Probable tRNA pseudouridine synthase D, found in Methanosarcina mazei (strain ATCC BAA-159 / DSM 3647 / Goe1 / Go1 / JCM 11833 / OCM 88) (Methanosarcina frisia).